A 514-amino-acid polypeptide reads, in one-letter code: Importin subunit alpha-3 (514 aa).

The region spanning 1–51 (MSSNRQAYYKNNAKEQIGKEKRNEEVVSIRKDKREEAISKRRNINTQIEDD) is the IBB domain. The tract at residues 1–62 (MSSNRQAYYK…ETSTTPPGPF (62 aa)) is disordered. Positions 12–39 (NAKEQIGKEKRNEEVVSIRKDKREEAIS) are enriched in basic and acidic residues. ARM repeat units lie at residues 101 to 142 (IDDL…TSEQ), 143 to 187 (TQAV…FRDY), 188 to 226 (CLEL…CKDP), 227 to 271 (APSP…EHIQ), 272 to 311 (MVIE…TDEQ), 312 to 353 (TQLV…NQQQ), 354 to 393 (VQDV…ISGR), and 394 to 436 (PNQV…KMAG). A disordered region spans residues 485-514 (GNVEGAQSSAFGGDVPPVPDAPNGGWNFGK).

The protein belongs to the importin alpha family. In terms of assembly, forms a complex with an importin beta subunit. May interact with transcription factor cebp-1 (via N-terminus). Interacts with cmk-1; affinity for cmk-1 is increased in the presence of Ca(2+) and calmodulin and leads to increased nuclear accumulation of cmk-1 in FLP neurons upon prolonged heat activation. As to expression, expressed in larval and adult germline and somatic tissues, including neurons.

The protein resides in the cytoplasm. Its subcellular location is the nucleus. Binds specifically and directly to substrates containing either a simple or bipartite NLS motif. Promotes docking of import substrates to the nuclear envelope. Seems to act as a cytosolic receptor for both simple and bipartite NLS motifs. Necessary for correct nucleoporin localization within the germline. Essential gene for embryonic and larval development. May be dispensable for axon development, but required for axon regeneration in both mechanosensory and motor neurons. Required for oogenic development, ima-1 and ima-2 cannot functionally compensate for loss of ima-3. This is Importin subunit alpha-3 (ima-3) from Caenorhabditis elegans.